The following is a 102-amino-acid chain: Glutaredoxin 1 (102 aa).

Residues 1–96 form the Glutaredoxin domain; that stretch reads MNKAILHTII…KLLEGQPKKK (96 aa). A disulfide bridge connects residues cysteine 17 and cysteine 20.

It belongs to the glutaredoxin family. In terms of assembly, monomer.

The protein resides in the cytoplasm. Has a glutathione-disulfide oxidoreductase activity in the presence of NADPH and glutathione reductase. Reduces low molecular weight disulfides and proteins. The protein is Glutaredoxin 1 (grxC1) of Rickettsia felis (strain ATCC VR-1525 / URRWXCal2) (Rickettsia azadi).